Here is a 397-residue protein sequence, read N- to C-terminus: Corticosteroid-binding globulin (397 aa).

A signal peptide spans M1–A22. N89, N169, N217, and N232 each carry an N-linked (GlcNAc...) asparagine glycan. Cortisol is bound at residue Q247. N253 carries N-linked (GlcNAc...) asparagine glycosylation. D279 serves as a coordination point for cortisol. N320 carries N-linked (GlcNAc...) asparagine glycosylation. Residue W385 coordinates cortisol.

It belongs to the serpin family. As to expression, expressed by the liver; secreted in plasma.

It is found in the secreted. Functionally, major transport protein for glucocorticoids and progestins in the blood of almost all vertebrate species. In Mus musculus (Mouse), this protein is Corticosteroid-binding globulin (Serpina6).